A 391-amino-acid chain; its full sequence is Glycerophosphocholine acyltransferase 1 (391 aa).

The Cytoplasmic portion of the chain corresponds to 1-66 (MSNNEDPINE…IAKQAEEHES (66 aa)). The chain crosses the membrane as a helical span at residues 67 to 87 (FINKVTHLLGVLGFGGFCFLL). At 88-92 (GARPQ) the chain is on the lumenal side. A helical transmembrane segment spans residues 93-113 (DIPYVYCLFFFIFVPLRWIYY). At 114 to 119 (RFKKWH) the chain is on the cytoplasmic side. The helical transmembrane segment at 120–140 (YFLLDFCYYANTIFLVDLLLY) threads the bilayer. Residues 141-144 (PKDE) lie on the Lumenal side of the membrane. The chain crosses the membrane as a helical span at residues 145-165 (KLFMVCFSFAEGPLAWALIVW). At 166–172 (RCSLVFS) the chain is on the cytoplasmic side. The helical transmembrane segment at 173–193 (SVDKIVSVLIHLLPGLVFFTI) threads the bilayer. Over 194 to 226 (RWWNPATFEAMHPEGTSGRASWPYVEDKSFLFT) the chain is Lumenal. Residues 227–247 (WLFLVPLVAYFLWQLLYFLIV) traverse the membrane as a helical segment. Topologically, residues 248–294 (NVLRRQRLLRDPEVMTSYRELSKKAQKANNVWWRLSGLLGDQNRMLM) are cytoplasmic. The helical transmembrane segment at 295-315 (YILLQALFTVATTALTVPIFL) threads the bilayer. Residues 316-318 (SYE) are Lumenal-facing. Residues 319 to 339 (LHAVFQILKVSAAVWNGGSFL) traverse the membrane as a helical segment. The Cytoplasmic portion of the chain corresponds to 340–391 (LDVMPRQVILKEKKKSELQPAHIQQYHSEPKQDQSPNSMEIRMKTIHSAEEQ). The tract at residues 354 to 391 (KSELQPAHIQQYHSEPKQDQSPNSMEIRMKTIHSAEEQ) is disordered. The span at 380–391 (IRMKTIHSAEEQ) shows a compositional bias: basic and acidic residues.

The protein belongs to the GPC1 family.

The protein resides in the membrane. It catalyses the reaction sn-glycerol 3-phosphocholine + an acyl-CoA = a monoacyl-sn-glycero-3-phosphocholine + CoA. The catalysed reaction is sn-glycero-3-phosphoethanolamine + an acyl-CoA = a monoacyl-sn-glycero-3-phosphoethanolamine + CoA. The enzyme catalyses sn-glycerol 3-phosphocholine + hexadecanoyl-CoA = hexadecanoyl-sn-glycero-3-phosphocholine + CoA. It carries out the reaction (9Z)-hexadecenoyl-CoA + sn-glycerol 3-phosphocholine = (9Z-hexadecenoyl)-sn-glycero-3-phosphocholine + CoA. It catalyses the reaction (9Z,12Z)-octadecadienoyl-CoA + sn-glycerol 3-phosphocholine = (9Z,12Z-octadecadienoyl)-sn-glycero-3-phosphocholine + CoA. The catalysed reaction is (12R)-hydroxy-(9Z)-octadecenoyl-CoA + sn-glycerol 3-phosphocholine = (12R-hydroxy-9Z-octadecenoyl)-sn-glycero-3-phosphocholine + CoA. The enzyme catalyses (9Z,12Z,15Z)-octadecatrienoyl-CoA + sn-glycerol 3-phosphocholine = (9Z,12Z,15Z-octadecatrienoyl)-sn-glycero-3-phosphocholine + CoA. It carries out the reaction sn-glycerol 3-phosphocholine + (9Z)-octadecenoyl-CoA = (9Z-octadecenoyl)-sn-glycero-3-phosphocholine + CoA. Its function is as follows. Glycerophosphocholine acyltransferase (GPCAT) that utilizes acyl-CoA to acylate glycero-3-phosphocholine (GPC), forming lysophosphatidylcholine (LPC). Shows broad acyl specificities with a preference for 16:0-CoA, polyunsaturated acyl-CoA, and the hydroxylated ricinoleoyl-CoA. Also catalyzes the acylation of glycero-3-phosphoethanolamine (GPE) with acyl-CoA. In addition to acyl-CoA, GPCAT efficiently utilizes LPC and lysophosphatidylethanolamine (LPE) as acyl donors in the acylation of GPC. Contributes to the maintenance of phosphatidylcholine (PC) homeostasis and might also have specific functions in acyl editing of PC, such as transferring acyl groups modified at the sn-2 position of PC to the sn-1. This is Glycerophosphocholine acyltransferase 1 from Ricinus communis (Castor bean).